Here is a 318-residue protein sequence, read N- to C-terminus: Acetyl-coenzyme A carboxylase carboxyl transferase subunit alpha (318 aa).

Positions 36-293 (EIDRLKEKST…KTRLSEQLDQ (258 aa)) constitute a CoA carboxyltransferase C-terminal domain.

Belongs to the AccA family. As to quaternary structure, acetyl-CoA carboxylase is a heterohexamer composed of biotin carboxyl carrier protein (AccB), biotin carboxylase (AccC) and two subunits each of ACCase subunit alpha (AccA) and ACCase subunit beta (AccD).

Its subcellular location is the cytoplasm. It catalyses the reaction N(6)-carboxybiotinyl-L-lysyl-[protein] + acetyl-CoA = N(6)-biotinyl-L-lysyl-[protein] + malonyl-CoA. Its pathway is lipid metabolism; malonyl-CoA biosynthesis; malonyl-CoA from acetyl-CoA: step 1/1. Its function is as follows. Component of the acetyl coenzyme A carboxylase (ACC) complex. First, biotin carboxylase catalyzes the carboxylation of biotin on its carrier protein (BCCP) and then the CO(2) group is transferred by the carboxyltransferase to acetyl-CoA to form malonyl-CoA. This Teredinibacter turnerae (strain ATCC 39867 / T7901) protein is Acetyl-coenzyme A carboxylase carboxyl transferase subunit alpha.